The following is a 381-amino-acid chain: Alkanesulfonate monooxygenase (381 aa).

The protein belongs to the SsuD family. As to quaternary structure, homotetramer.

It carries out the reaction an alkanesulfonate + FMNH2 + O2 = an aldehyde + FMN + sulfite + H2O + 2 H(+). Its function is as follows. Catalyzes the desulfonation of aliphatic sulfonates. The polypeptide is Alkanesulfonate monooxygenase (Escherichia coli O157:H7).